A 368-amino-acid polypeptide reads, in one-letter code: Isocitrate dehydrogenase [NAD] regulatory subunit 3, mitochondrial (368 aa).

The N-terminal 26 residues, 1-26 (MARRSVSIFNRLLANPPSPFTSLSRS), are a transit peptide targeting the mitochondrion.

This sequence belongs to the isocitrate and isopropylmalate dehydrogenases family. As to quaternary structure, heterooligomer of catalytic and regulatory subunits. Interacts with 14-3-3-like proteins GRF1 GRF3 and GRF8. In terms of tissue distribution, mainly expressed at a low level in pollen.

It localises to the mitochondrion. Performs an essential role in the oxidative function of the citric acid cycle. The sequence is that of Isocitrate dehydrogenase [NAD] regulatory subunit 3, mitochondrial (IDH3) from Arabidopsis thaliana (Mouse-ear cress).